The chain runs to 131 residues: Small ribosomal subunit protein uS8 (131 aa).

It belongs to the universal ribosomal protein uS8 family. Part of the 30S ribosomal subunit. Contacts proteins S5 and S12.

Functionally, one of the primary rRNA binding proteins, it binds directly to 16S rRNA central domain where it helps coordinate assembly of the platform of the 30S subunit. This Campylobacter jejuni (strain RM1221) protein is Small ribosomal subunit protein uS8.